The sequence spans 25 residues: Caerin-1.18 (25 aa).

Leu-25 is modified (leucine amide).

As to expression, expressed by the skin dorsal glands.

It localises to the secreted. Shows significant activity against Gram-positive organisms, but is less effective against Gram-negative organisms. This chain is Caerin-1.18, found in Ranoidea gracilenta (Dainty green tree frog).